We begin with the raw amino-acid sequence, 75 residues long: Penaeidin-3m (75 aa).

The signal sequence occupies residues 1 to 19 (MRLVVCLVFLASFALVCQG). The residue at position 20 (glutamine 20) is a Pyrrolidone carboxylic acid. Intrachain disulfides connect cysteine 44-cysteine 59, cysteine 48-cysteine 66, and cysteine 60-cysteine 67. Residue serine 74 is modified to Serine amide.

It belongs to the penaeidin family.

Its subcellular location is the cytoplasmic granule. Functionally, antibacterial and antifungal activity. Presents chitin-binding activity. The polypeptide is Penaeidin-3m (Penaeus setiferus (Atlantic white shrimp)).